Here is a 187-residue protein sequence, read N- to C-terminus: Adenylate kinase (187 aa).

10-15 (GSGKGT) contacts ATP. The tract at residues 30–59 (STGDLLRAEVAAGSPLGLKAKEVMARGDLV) is NMP. AMP contacts are provided by residues Thr-31, Arg-36, 57–59 (DLV), 85–88 (GYPR), and Gln-92. An LID region spans residues 126–136 (GRAKAEGREDD). An ATP-binding site is contributed by Arg-127. AMP is bound by residues Arg-133 and Arg-144. Position 172 (Gly-172) interacts with ATP.

The protein belongs to the adenylate kinase family. Monomer.

It is found in the cytoplasm. It catalyses the reaction AMP + ATP = 2 ADP. The protein operates within purine metabolism; AMP biosynthesis via salvage pathway; AMP from ADP: step 1/1. Catalyzes the reversible transfer of the terminal phosphate group between ATP and AMP. Plays an important role in cellular energy homeostasis and in adenine nucleotide metabolism. This chain is Adenylate kinase, found in Xanthomonas oryzae pv. oryzae (strain MAFF 311018).